The chain runs to 558 residues: Acylase ACY 1 proenzyme (558 aa).

T368 acts as the Nucleophile in catalysis.

Belongs to the gamma-glutamyltransferase family. In terms of assembly, dimer of two non-identical chains processed from the same precursor.

It catalyses the reaction (7R)-7-(4-carboxybutanamido)cephalosporanate + H2O = (7R)-7-aminocephalosporanate + glutarate. It carries out the reaction an N-terminal (5-L-glutamyl)-[peptide] + an alpha-amino acid = 5-L-glutamyl amino acid + an N-terminal L-alpha-aminoacyl-[peptide]. The catalysed reaction is glutathione + H2O = L-cysteinylglycine + L-glutamate. The enzyme catalyses an S-substituted glutathione + H2O = an S-substituted L-cysteinylglycine + L-glutamate. In terms of biological role, besides the cephalosporin acylase I activity which converts GL-7ACA into 7-ACA; this enzyme displays some gamma glutamyltranspeptidase activity. The sequence is that of Acylase ACY 1 proenzyme (acyI) from Pseudomonas sp. (strain V22).